A 344-amino-acid chain; its full sequence is Lipase chaperone (344 aa).

Residues 14–34 form a helical membrane-spanning segment; that stretch reads VAVYGAVGLAAIAGVAIWSGA.

It belongs to the lipase chaperone family.

It is found in the cell inner membrane. Its function is as follows. May be involved in the folding of the extracellular lipase during its passage through the periplasm. This is Lipase chaperone from Burkholderia ambifaria (strain MC40-6).